The sequence spans 636 residues: Beta-galactosidase-1-like protein 2 (636 aa).

The N-terminal stretch at Met1–Trp32 is a signal peptide. The active-site Proton donor is Glu201. Residue Glu277 is the Nucleophile of the active site.

The protein belongs to the glycosyl hydrolase 35 family.

It localises to the secreted. The polypeptide is Beta-galactosidase-1-like protein 2 (GLB1L2) (Homo sapiens (Human)).